Reading from the N-terminus, the 757-residue chain is Polyribonucleotide nucleotidyltransferase (757 aa).

Asp-488 and Asp-494 together coordinate Mg(2+). Positions 555-614 constitute a KH domain; that stretch reads PKLYTMKINAEKIRDVIGKGGAVIRALTEETGCQINIEEDGTITIAATDAAKADIAKRRI. Residues 624–692 form the S1 motif domain; that stretch reads GKIYEGPVTK…ERGRVKLSMK (69 aa). Residues 693–757 are disordered; that stretch reads VLAERPAPGS…ADTGSGQRVG (65 aa). Residues 720-736 are compositionally biased toward basic and acidic residues; that stretch reads ALAEREPRREMRDHGHP. Residues 737 to 747 are compositionally biased toward low complexity; that stretch reads PSEQQQQQSPP.

It belongs to the polyribonucleotide nucleotidyltransferase family. It depends on Mg(2+) as a cofactor.

The protein localises to the cytoplasm. It catalyses the reaction RNA(n+1) + phosphate = RNA(n) + a ribonucleoside 5'-diphosphate. In terms of biological role, involved in mRNA degradation. Catalyzes the phosphorolysis of single-stranded polyribonucleotides processively in the 3'- to 5'-direction. This Verminephrobacter eiseniae (strain EF01-2) protein is Polyribonucleotide nucleotidyltransferase.